The chain runs to 350 residues: Ubiquitin carboxyl-terminal hydrolase 11 (350 aa).

Positions 49 to 344 (KGLYNVSGND…SACLLFYEME (296 aa)) constitute a USP domain. The active-site Nucleophile is the C59. H302 serves as the catalytic Proton acceptor.

The protein belongs to the peptidase C19 family.

The catalysed reaction is Thiol-dependent hydrolysis of ester, thioester, amide, peptide and isopeptide bonds formed by the C-terminal Gly of ubiquitin (a 76-residue protein attached to proteins as an intracellular targeting signal).. In Schizosaccharomyces pombe (strain 972 / ATCC 24843) (Fission yeast), this protein is Ubiquitin carboxyl-terminal hydrolase 11 (ubp11).